A 215-amino-acid polypeptide reads, in one-letter code: S-crystallin 2 (215 aa).

The GST N-terminal domain maps to 2–80 (PSYTLHYFNH…YLAREFGFHG (79 aa)). The GST C-terminal domain occupies 82–215 (NNLDMARVDF…YLKSRSSTDF (134 aa)).

This sequence belongs to the GST superfamily. Lens.

S-crystallins are structural components of squids and octopi eye lens. Contains relatively little GST activity (1/1000 of that of mammalian GST enzyme). In Octopus vulgaris (Common octopus), this protein is S-crystallin 2 (OCTS2).